We begin with the raw amino-acid sequence, 163 residues long: Carbon monoxide dehydrogenase small chain (163 aa).

The 77-residue stretch at 4–80 (KIITVNVNGK…GSEVLTVEGL (77 aa)) folds into the 2Fe-2S ferredoxin-type domain. 8 residues coordinate [2Fe-2S] cluster: Cys42, Cys47, Cys50, Cys62, Cys101, Cys104, Cys136, and Cys138.

In terms of assembly, dimer of heterotrimers. Each heterotrimer consists of a large, a medium and a small subunit. It depends on [2Fe-2S] cluster as a cofactor.

It carries out the reaction CO + a quinone + H2O = a quinol + CO2. Functionally, catalyzes the oxidation of carbon monoxide to carbon dioxide. The protein is Carbon monoxide dehydrogenase small chain (cutS) of Hydrogenophaga pseudoflava (Pseudomonas carboxydoflava).